We begin with the raw amino-acid sequence, 215 residues long: Pyrrolidone-carboxylate peptidase (215 aa).

Residues glutamate 81, cysteine 144, and histidine 168 contribute to the active site.

Belongs to the peptidase C15 family. In terms of assembly, homotetramer.

The protein resides in the cytoplasm. The catalysed reaction is Release of an N-terminal pyroglutamyl group from a polypeptide, the second amino acid generally not being Pro.. Removes 5-oxoproline from various penultimate amino acid residues except L-proline. The polypeptide is Pyrrolidone-carboxylate peptidase (Bacillus licheniformis (strain ATCC 14580 / DSM 13 / JCM 2505 / CCUG 7422 / NBRC 12200 / NCIMB 9375 / NCTC 10341 / NRRL NRS-1264 / Gibson 46)).